The sequence spans 90 residues: DNA-binding protein HRm (90 aa).

Belongs to the bacterial histone-like protein family.

Functionally, histone-like DNA-binding protein which is capable of wrapping DNA to stabilize it, and thus to prevent its denaturation under extreme environmental conditions. The sequence is that of DNA-binding protein HRm (hupB) from Rhizobium meliloti (strain 1021) (Ensifer meliloti).